Reading from the N-terminus, the 466-residue chain is 3-isopropylmalate dehydratase large subunit (466 aa).

Residues Cys345, Cys405, and Cys408 each coordinate [4Fe-4S] cluster.

The protein belongs to the aconitase/IPM isomerase family. LeuC type 1 subfamily. Heterodimer of LeuC and LeuD. Requires [4Fe-4S] cluster as cofactor.

The catalysed reaction is (2R,3S)-3-isopropylmalate = (2S)-2-isopropylmalate. Its pathway is amino-acid biosynthesis; L-leucine biosynthesis; L-leucine from 3-methyl-2-oxobutanoate: step 2/4. In terms of biological role, catalyzes the isomerization between 2-isopropylmalate and 3-isopropylmalate, via the formation of 2-isopropylmaleate. This Microcystis aeruginosa (strain NIES-843 / IAM M-2473) protein is 3-isopropylmalate dehydratase large subunit.